We begin with the raw amino-acid sequence, 323 residues long: tRNA dimethylallyltransferase (323 aa).

15–22 (GATGSGKT) contacts ATP. Position 17–22 (17–22 (TGSGKT)) interacts with substrate. Interaction with substrate tRNA regions lie at residues 40 to 43 (DSRQ) and 164 to 168 (QRLIR).

This sequence belongs to the IPP transferase family. Monomer. Mg(2+) is required as a cofactor.

The catalysed reaction is adenosine(37) in tRNA + dimethylallyl diphosphate = N(6)-dimethylallyladenosine(37) in tRNA + diphosphate. Its function is as follows. Catalyzes the transfer of a dimethylallyl group onto the adenine at position 37 in tRNAs that read codons beginning with uridine, leading to the formation of N6-(dimethylallyl)adenosine (i(6)A). In Chloroherpeton thalassium (strain ATCC 35110 / GB-78), this protein is tRNA dimethylallyltransferase.